We begin with the raw amino-acid sequence, 537 residues long: Light-independent protochlorophyllide reductase subunit B (537 aa).

Residue aspartate 36 coordinates [4Fe-4S] cluster. Aspartate 292 acts as the Proton donor in catalysis. 428-429 (GL) is a binding site for substrate. The disordered stretch occupies residues 459–483 (TAGETAGQATEAATAPATPGAPLTG).

The protein belongs to the ChlB/BchB/BchZ family. In terms of assembly, protochlorophyllide reductase is composed of three subunits; BchL, BchN and BchB. Forms a heterotetramer of two BchB and two BchN subunits. [4Fe-4S] cluster serves as cofactor.

The enzyme catalyses chlorophyllide a + oxidized 2[4Fe-4S]-[ferredoxin] + 2 ADP + 2 phosphate = protochlorophyllide a + reduced 2[4Fe-4S]-[ferredoxin] + 2 ATP + 2 H2O. It functions in the pathway porphyrin-containing compound metabolism; bacteriochlorophyll biosynthesis (light-independent). Functionally, component of the dark-operative protochlorophyllide reductase (DPOR) that uses Mg-ATP and reduced ferredoxin to reduce ring D of protochlorophyllide (Pchlide) to form chlorophyllide a (Chlide). This reaction is light-independent. The NB-protein (BchN-BchB) is the catalytic component of the complex. The polypeptide is Light-independent protochlorophyllide reductase subunit B (Chloroherpeton thalassium (strain ATCC 35110 / GB-78)).